A 506-amino-acid polypeptide reads, in one-letter code: NAD(P)H-quinone oxidoreductase subunit 2 (506 aa).

Transmembrane regions (helical) follow at residues 14 to 34 (AIIPEAFILLGIVGTLLVDLA), 42 to 62 (WAPIICYLSIGSSLVSLALQW), 79 to 99 (LAIAFRAIISLSTLISLLISW), 108 to 128 (PIGEFAAIVLSATLGAMLLCG), 132 to 152 (LISVFISLETLSVASYLLSGY), 167 to 187 (LLVGSAAAAVYLYGSSFLYGL), 206 to 226 (FITSLALVFVLSTVAFKIAAV), 240 to 260 (PTPVVAFLSVGSKTAGFAFAI), 276 to 296 (LLFTILAILSMALGNVVALAQ), 302 to 322 (MLAYSSIGQAGFVMIGIVSGT), 330 to 350 (VLYLAAYLFMNLGAFSCVILF), 374 to 394 (LGLSLCLLSLGGLPPMLGFFG), and 409 to 429 (LLVIVGLVTSVISIYYYISVI).

The protein belongs to the complex I subunit 2 family. NDH-1 can be composed of about 15 different subunits; different subcomplexes with different compositions have been identified which probably have different functions.

It localises to the cellular thylakoid membrane. It catalyses the reaction a plastoquinone + NADH + (n+1) H(+)(in) = a plastoquinol + NAD(+) + n H(+)(out). The catalysed reaction is a plastoquinone + NADPH + (n+1) H(+)(in) = a plastoquinol + NADP(+) + n H(+)(out). Functionally, NDH-1 shuttles electrons from an unknown electron donor, via FMN and iron-sulfur (Fe-S) centers, to quinones in the respiratory and/or the photosynthetic chain. The immediate electron acceptor for the enzyme in this species is believed to be plastoquinone. Couples the redox reaction to proton translocation, and thus conserves the redox energy in a proton gradient. Cyanobacterial NDH-1 also plays a role in inorganic carbon-concentration. This is NAD(P)H-quinone oxidoreductase subunit 2 from Prochlorococcus marinus (strain AS9601).